We begin with the raw amino-acid sequence, 250 residues long: UPF0524 protein C3orf70 (250 aa).

The disordered stretch occupies residues 201–250 (ESCDEDTEEGAELSSEEDYSPESSWEPDECTLLSPSQSDLEVIETIETTV). Over residues 202 to 229 (SCDEDTEEGAELSSEEDYSPESSWEPDE) the composition is skewed to acidic residues.

It belongs to the UPF0524 family.

Functionally, may play a role in neuronal and neurobehavioral development. The chain is UPF0524 protein C3orf70 (C3orf70) from Homo sapiens (Human).